The sequence spans 686 residues: MRVVRCVRRFSASRAVSGQNTTEKIVQAHAVGLRPGHRVASGDYVSIRPAHCMSHDNSWPVALKFMGLGATRVHDARQVVCTLDHDVQNRSEKNLAKYRNIELFAAQQGVDFYPARRGIGHQIMVEEGYAFPLGLTVASDSHSNTYGGVGALGTPVVRTDAAAIWATGQTWWQVPPVARVELTGELPAGVSGKDAIVALCGVFGRDEVLNHAVEFAGPGVARLTVEQRLTVANMTTEWGALSGLFPVDGVLLDWYREQVARAPAGHARLTAARVDALAERAAAMQPDTDARYAKQLTLDLSSLTHYVSGPNSVKVARPIAELAPQQLRIDKAYLLSCTNGRLEDLEAAAAVLRADGSVRQVAPGVEFYIAAASAEVEAQARARGTWDVLLSAGCIPLPSGCGPCIGLGKGLLEAGEVGISATNRNFRGRMGSKDAEAYLASPAVVAASAVLGRIAAPCEVLGLSPPAAPAVRASVAQCGAPAAADGAAAAVEVLPGFPRAITGELVLCDADNINTDGIYPGKYTYEDDIPRETMARVCMENYDLDFQHNVHAGDIVVGGYNFGTGSSREQAATALLAKGVPLVVAGSFSNTFSRNAINNALLTLELPALLQLLRERYADAPSQATRRTGVFLTWDVAAATVTVTVGSPTGERVLHQRVGEFSANLQEIIVKGGLEGWVKHALAQSA.

The transit peptide at 1–17 (MRVVRCVRRFSASRAVS) directs the protein to the mitochondrion. Residues Cys337, Cys401, and Cys404 each coordinate [4Fe-4S] cluster.

Belongs to the aconitase/IPM isomerase family. [4Fe-4S] cluster is required as a cofactor.

The protein localises to the mitochondrion. The catalysed reaction is (2R,3S)-homoisocitrate = cis-homoaconitate + H2O. It participates in amino-acid biosynthesis; L-lysine biosynthesis via AAA pathway; L-alpha-aminoadipate from 2-oxoglutarate: step 3/5. In terms of biological role, catalyzes the reversible hydration of cis-homoaconitate to (2R,3S)-homoisocitrate, a step in the alpha-aminoadipate pathway for lysine biosynthesis. The sequence is that of Homoaconitase, mitochondrial (LYS4) from Eremothecium gossypii (strain ATCC 10895 / CBS 109.51 / FGSC 9923 / NRRL Y-1056) (Yeast).